Here is a 222-residue protein sequence, read N- to C-terminus: Ribonuclease S-3 (222 aa).

The first 22 residues, 1 to 22 (MVHVVMMVFLLIVLILCSSTVG), serve as a signal peptide directing secretion. RNA is bound at residue Gln31. Cys37 and Cys44 form a disulfide bridge. Asn40 carries N-linked (GlcNAc...) asparagine glycosylation. Residues His55, 92–93 (NV), Phe102, 105–106 (KE), and 109–110 (KH) each bind RNA. His55 functions as the Proton donor in the catalytic mechanism. An intrachain disulfide couples Cys70 to Cys113. Active-site residues include Glu106 and Lys109. Catalysis depends on His110, which acts as the Proton acceptor. An N-linked (GlcNAc...) asparagine glycan is attached at Asn138. 2 disulfides stabilise this stretch: Cys177–Cys215 and Cys192–Cys203.

This sequence belongs to the RNase T2 family. In terms of processing, N-linked core structure at Asn-138 contains xylose.

It catalyses the reaction a ribonucleotidyl-ribonucleotide-RNA + H2O = a 3'-end 3'-phospho-ribonucleotide-RNA + a 5'-end dephospho-ribonucleoside-RNA + H(+). Functionally, self-incompatibility (SI) is the inherited ability of a flowering plant to prevent self-fertilization by discriminating between self and non-self pollen during pollination. In many species, self-incompatibility is controlled by the single, multiallelic locus S. The protein is Ribonuclease S-3 of Pyrus pyrifolia (Chinese pear).